A 488-amino-acid polypeptide reads, in one-letter code: Pup--protein ligase (488 aa).

Glutamate 33 serves as a coordination point for Mg(2+). Arginine 76 is a binding site for ATP. Tyrosine 78 contacts Mg(2+). Residue aspartate 80 is the Proton acceptor of the active site. Residue glutamate 86 coordinates Mg(2+). Residues threonine 89 and tryptophan 453 each contribute to the ATP site.

The protein belongs to the Pup ligase/Pup deamidase family. Pup-conjugating enzyme subfamily.

The enzyme catalyses ATP + [prokaryotic ubiquitin-like protein]-L-glutamate + [protein]-L-lysine = ADP + phosphate + N(6)-([prokaryotic ubiquitin-like protein]-gamma-L-glutamyl)-[protein]-L-lysine.. The protein operates within protein degradation; proteasomal Pup-dependent pathway. It functions in the pathway protein modification; protein pupylation. In terms of biological role, catalyzes the covalent attachment of the prokaryotic ubiquitin-like protein modifier Pup to the proteasomal substrate proteins, thereby targeting them for proteasomal degradation. This tagging system is termed pupylation. The ligation reaction involves the side-chain carboxylate of the C-terminal glutamate of Pup and the side-chain amino group of a substrate lysine. The chain is Pup--protein ligase from Bifidobacterium adolescentis (strain ATCC 15703 / DSM 20083 / NCTC 11814 / E194a).